We begin with the raw amino-acid sequence, 669 residues long: DNA ligase (669 aa).

NAD(+)-binding positions include 34-38 (DAEYD), 83-84 (SL), and E114. Catalysis depends on K116, which acts as the N6-AMP-lysine intermediate. R137, E171, K287, and K311 together coordinate NAD(+). Zn(2+) is bound by residues C405, C408, C423, and C428. Residues 591-669 (NVESYFAGKT…EERFLQELNK (79 aa)) form the BRCT domain.

Belongs to the NAD-dependent DNA ligase family. LigA subfamily. Mg(2+) is required as a cofactor. Mn(2+) serves as cofactor.

It catalyses the reaction NAD(+) + (deoxyribonucleotide)n-3'-hydroxyl + 5'-phospho-(deoxyribonucleotide)m = (deoxyribonucleotide)n+m + AMP + beta-nicotinamide D-nucleotide.. Functionally, DNA ligase that catalyzes the formation of phosphodiester linkages between 5'-phosphoryl and 3'-hydroxyl groups in double-stranded DNA using NAD as a coenzyme and as the energy source for the reaction. It is essential for DNA replication and repair of damaged DNA. The chain is DNA ligase from Bacillus mycoides (strain KBAB4) (Bacillus weihenstephanensis).